The following is a 332-amino-acid chain: uncharacterized protein (332 aa).

Residues 27 to 47 (CAIVFLCVLLILPFLSCCTSL) form a helical membrane-spanning segment.

It localises to the membrane. This is an uncharacterized protein from Treponema pallidum (strain Nichols).